The primary structure comprises 84 residues: Cell division topological specificity factor (84 aa).

It belongs to the MinE family.

Prevents the cell division inhibition by proteins MinC and MinD at internal division sites while permitting inhibition at polar sites. This ensures cell division at the proper site by restricting the formation of a division septum at the midpoint of the long axis of the cell. This chain is Cell division topological specificity factor, found in Burkholderia cenocepacia (strain HI2424).